Consider the following 388-residue polypeptide: Alanine racemase 1 (388 aa).

The active-site Proton acceptor; specific for D-alanine is the Lys-40. Lys-40 is subject to N6-(pyridoxal phosphate)lysine. Arg-138 is a binding site for substrate. The Proton acceptor; specific for L-alanine role is filled by Tyr-268. Residue Met-316 participates in substrate binding.

Belongs to the alanine racemase family. Pyridoxal 5'-phosphate is required as a cofactor.

The enzyme catalyses L-alanine = D-alanine. It functions in the pathway amino-acid biosynthesis; D-alanine biosynthesis; D-alanine from L-alanine: step 1/1. Its function is as follows. Catalyzes the interconversion of L-alanine and D-alanine. May also act on other amino acids. The protein is Alanine racemase 1 (alr1) of Caldanaerobacter subterraneus subsp. tengcongensis (strain DSM 15242 / JCM 11007 / NBRC 100824 / MB4) (Thermoanaerobacter tengcongensis).